A 188-amino-acid polypeptide reads, in one-letter code: UPF0200 protein M1627_1244 (188 aa).

Residue 15–22 (GMPGSGKS) coordinates ATP.

This sequence belongs to the UPF0200 family.

The polypeptide is UPF0200 protein M1627_1244 (Saccharolobus islandicus (strain M.16.27) (Sulfolobus islandicus)).